The sequence spans 244 residues: 1-(5-phosphoribosyl)-5-[(5-phosphoribosylamino)methylideneamino] imidazole-4-carboxamide isomerase (244 aa).

Asp-10 (proton acceptor) is an active-site residue. Asp-132 acts as the Proton donor in catalysis.

This sequence belongs to the HisA/HisF family.

The protein localises to the cytoplasm. The catalysed reaction is 1-(5-phospho-beta-D-ribosyl)-5-[(5-phospho-beta-D-ribosylamino)methylideneamino]imidazole-4-carboxamide = 5-[(5-phospho-1-deoxy-D-ribulos-1-ylimino)methylamino]-1-(5-phospho-beta-D-ribosyl)imidazole-4-carboxamide. It participates in amino-acid biosynthesis; L-histidine biosynthesis; L-histidine from 5-phospho-alpha-D-ribose 1-diphosphate: step 4/9. This chain is 1-(5-phosphoribosyl)-5-[(5-phosphoribosylamino)methylideneamino] imidazole-4-carboxamide isomerase, found in Xanthomonas euvesicatoria pv. vesicatoria (strain 85-10) (Xanthomonas campestris pv. vesicatoria).